Here is a 411-residue protein sequence, read N- to C-terminus: uncharacterized protein (411 aa).

It belongs to the peptidase M20 family.

This is an uncharacterized protein from Haemophilus influenzae (strain ATCC 51907 / DSM 11121 / KW20 / Rd).